We begin with the raw amino-acid sequence, 333 residues long: MRVLGIETSCDETGVAIYDSESGLLADQLYSQVKLHAQYGGVVPELASRDHIRKIVPLIQATLKEACVSPQEIDAVAYTAGPGLIGALLVGASVGRALAFAWNVPAVPVHHMEAHLLAPMLEDQVPDFPFIALLVSGGHTQLVQVNAIGKYALLGESLDDAVGEAFDKTAKLLGLEYPGGAMLAHLAQQGDPDRFIFPRPMIDRPGLDFSFSGLKTAAALTIRANHQDEQTRCDIAYAFEKAVIDTLAIKSERALEQTGLTRLVLAGGVSANEKLRSKLSVIMHERQGKVFYARPQFCTDNGAMIAYAGWRRIQEGSRSDLSISVHPKWALSQ.

Residues His-111 and His-115 each contribute to the Fe cation site. Substrate contacts are provided by residues 134-138 (LVSGG), Asp-167, Gly-180, and Asn-272. Asp-300 contributes to the Fe cation binding site.

The protein belongs to the KAE1 / TsaD family. The cofactor is Fe(2+).

It localises to the cytoplasm. It carries out the reaction L-threonylcarbamoyladenylate + adenosine(37) in tRNA = N(6)-L-threonylcarbamoyladenosine(37) in tRNA + AMP + H(+). Functionally, required for the formation of a threonylcarbamoyl group on adenosine at position 37 (t(6)A37) in tRNAs that read codons beginning with adenine. Is involved in the transfer of the threonylcarbamoyl moiety of threonylcarbamoyl-AMP (TC-AMP) to the N6 group of A37, together with TsaE and TsaB. TsaD likely plays a direct catalytic role in this reaction. The polypeptide is tRNA N6-adenosine threonylcarbamoyltransferase (Hamiltonella defensa subsp. Acyrthosiphon pisum (strain 5AT)).